Consider the following 347-residue polypeptide: DNA polymerase III subunit delta (347 aa).

It belongs to the DNA polymerase HolA subunit family. Component of the DNA clamp loading complex consisting of tau(3):delta(1):delta'(1). The DNA polymerase III holoenzyme complex contains at least 10 different subunits organized into 3 functionally essential subassemblies: the Pol III core, the beta sliding clamp processivity factor and the clamp-loading complex. The Pol III core (subunits alpha, epsilon and theta) contains the polymerase and the 3'-5' exonuclease proofreading activities. The polymerase is tethered to the template via the dimeric beta sliding clamp processivity factor. The DNA clamp-loading complex assembles the beta sliding clamp onto the primed template and plays a central role in the organization and communication at the replication fork.

It is found in the cytoplasm. It localises to the nucleoid. It catalyses the reaction DNA(n) + a 2'-deoxyribonucleoside 5'-triphosphate = DNA(n+1) + diphosphate. In terms of biological role, part of the beta sliding clamp loading complex, which hydrolyzes ATP to load the beta clamp onto primed DNA to form the DNA replication pre-initiation complex. DNA polymerase III is a complex, multichain enzyme responsible for most of the replicative synthesis in bacteria. This DNA polymerase also exhibits 3'-5' exonuclease activity. The delta subunit is the wrench that will open the beta subunit dimer. The DNA clamp loading complex (tau(3),delta,delta') is thought to load beta dimers onto DNA by binding ATP which alters the complex's conformation so it can bind beta sliding clamp dimers and open them at one interface. Primed DNA is recognized, ATP is hydrolyzed releasing the clamp loading complex and closing the beta sliding clamp ring around the primed DNA. In Bacillus subtilis (strain 168), this protein is DNA polymerase III subunit delta.